The following is a 142-amino-acid chain: MTIIIGSDVDGKRLKELIKDYLEDNDYDVLDVTEGKDLDFVDSTVSVAKEVQKSDDNLGIAIDAYGAGSFIVATKIKGMIAAEVSDERSAYMTRSHNNARMITMGAEIVGDTLAKNVAKEFVNGHYDGGRHQIRVDMLNKMC.

It belongs to the LacAB/RpiB family. Heteromultimeric protein consisting of LacA and LacB.

The catalysed reaction is aldehydo-D-galactose 6-phosphate = keto-D-tagatose 6-phosphate. It participates in carbohydrate metabolism; D-galactose 6-phosphate degradation; D-tagatose 6-phosphate from D-galactose 6-phosphate: step 1/1. This chain is Galactose-6-phosphate isomerase subunit LacA, found in Staphylococcus epidermidis (strain ATCC 35984 / DSM 28319 / BCRC 17069 / CCUG 31568 / BM 3577 / RP62A).